The chain runs to 1313 residues: MSGWRYLICVSFLLTILLELTYQGPPVPASSSTKLLMTSYSMRSTVVSRYAHTLVTSVLFNPHAEAHEAIFDLDLPHLAFISNFTMTINNKVYIAEVKEKHQAKKIYEEAHQQGKTAAHVGIRDRESEKFRISTSLAAGTEVTFSLAYEELLQRHQGQYQLVVSLRPGQLVKRLSIEVTVSERTGISYVHIPPLRTGRLRTNAHASEVDSPPSTRIERGETCVRITYCPTLQDQSSISGSGIMADFLVQYDVVMEDIIGDVQIYDDYFIHYFAPRGLPPMEKNVVFVIDVSSSMFGTKMEQTKTAMNVILSDLQANDYFNIISFSDTVNVWKAGGSIQATIQNVHSAKDYLHCMEADGWTDVNSALLAAASVLNHSNQEPGRGPSVGRIPLIIFLTDGEPTAGVTTPSVILSNVRQALGHRVSLFSLAFGDDADFTLLRRLSLENRGIARRIYEDTDAALQLKGLYEEISMPLLADVRLNYLGGLVGASPWAVFPNYFGGSELVVAGQVQPGKQELGIHLAARGPKDQLLVAHHSEGATNNSQKAFGCPGEPAPNVAHFIRRLWAYVTIGELLDAHFQARDTTTRHLLAAKVLNLSLEYNFVTPLTSLVMVQPKQASEETRRQTSTSAGPDTIMPSSSSRHGLGVSTAQPALVPKVISPKSRPVKPKFYLSSTTTASTKKMLSSKELEPLGESPHTLSMPTYPKAKIPAQQDSGTLAQPTLRTKPTILVPSNSGTLLPLKPGSLSHQNPDILPTNSRTQVPPVKPGIPASPKADTVKCVTPLHSKPGAPSHPQLGALTSQAPKGLPQSRPGVSTLQVPKYPLHTRPRVPAPKTRNNMPHLGPGILLSKTPKILLSLKPSAPPHQISTSISLSKPETPNPHMPQTPLPPRPDRPRPPLPESLSTFPNTISSSTGPSSTTTTSVLGEPLPMPFTPTLPPGRFWHQYDLLPGPQRTRQVLGPSRPGVPTMSLLNSSRPTPEGSPPNLPILLPSSILPEAISLLLLPEELELLSESMVESKFVESLNPPAFYTFLTPDEDGSPNWDGNSEEILGGAGGSMESQGSSVGLAKGTLPSIFTFSSSVDGDPHFVIQIPHSEEKICFTLNGHPGDLLQLIEDPKAGLHVSGKLLGAPPRPGHKDQTRTYFQIITVTTDKPRAYTITISRSSISLRGEGTLRLSWDQPALLKRPQLELYVAAAARLTLRLGPYLEFLVLRHRYRHPSTLQLPHLGFYVANGSGLSPSARGLIGQFQHADIRLVTGPMGPCLRRHHGPDVPVILGKRLLKDSPRLLPRWASCWLVKRSHVELLLGHPYLSYVL.

An N-terminal signal peptide occupies residues Met-1–Gln-23. Residues Gly-24–Glu-150 enclose the VIT domain. Residues Asn-83, Asn-374, Asn-540, and Asn-594 are each glycosylated (N-linked (GlcNAc...) asparagine). A VWFA domain is found at Asn-283–Ile-469. Disordered regions lie at residues Gln-612 to Gly-644, His-783 to Val-817, Leu-856 to Pro-928, and Pro-959 to Asn-983. Residues Gln-623 to Arg-640 are compositionally biased toward polar residues. A compositionally biased stretch (polar residues) spans Gln-864 to Glu-875. A compositionally biased stretch (pro residues) spans Thr-876–Pro-888. Positions Thr-907 to Ser-921 are enriched in low complexity. 2 N-linked (GlcNAc...) asparagine glycosylation sites follow: Asn-971 and Asn-1231.

It belongs to the ITIH family.

The protein resides in the secreted. The sequence is that of Inter-alpha-trypsin inhibitor heavy chain H6 (ITIH6) from Homo sapiens (Human).